The chain runs to 181 residues: ADP-ribosylation factor 2 (181 aa).

A lipid anchor (N-myristoyl glycine) is attached at Gly-2. GTP contacts are provided by residues 24-31 (GLDAAGKT), 67-71 (DVGGQ), and 126-129 (NKQD).

This sequence belongs to the small GTPase superfamily. Arf family.

The protein resides in the golgi apparatus. Its function is as follows. GTP-binding protein that functions as an allosteric activator of the cholera toxin catalytic subunit, an ADP-ribosyltransferase. Involved in protein trafficking; may modulate vesicle budding and uncoating within the Golgi apparatus. In Bos taurus (Bovine), this protein is ADP-ribosylation factor 2 (ARF2).